Consider the following 232-residue polypeptide: Putative dimethylsulfoniopropionate lyase DddL (232 aa).

Residues histidine 154, glutamate 159, tyrosine 161, and histidine 190 each contribute to the a divalent metal cation site.

Belongs to the non-heme iron-dependent dioxygenase family. As to quaternary structure, homodimer. A divalent metal cation serves as cofactor.

The enzyme catalyses S,S-dimethyl-beta-propiothetin = acrylate + dimethyl sulfide + H(+). Functionally, may cleave dimethylsulfoniopropionate (DMSP), releasing dimethyl sulfide (DMS). DMS is the principal form by which sulfur is transported from oceans to the atmosphere. The real activity of the protein is however subject to debate and it is unclear whether it constitutes a real dimethylsulfoniopropionate lyase in vivo. The sequence is that of Putative dimethylsulfoniopropionate lyase DddL (dddL) from Cereibacter sphaeroides (strain ATCC 17023 / DSM 158 / JCM 6121 / CCUG 31486 / LMG 2827 / NBRC 12203 / NCIMB 8253 / ATH 2.4.1.) (Rhodobacter sphaeroides).